We begin with the raw amino-acid sequence, 1377 residues long: DNA-directed RNA polymerase subunit beta'' (1377 aa).

Positions 224, 294, 301, and 304 each coordinate Zn(2+).

Belongs to the RNA polymerase beta' chain family. RpoC2 subfamily. In plastids the minimal PEP RNA polymerase catalytic core is composed of four subunits: alpha, beta, beta', and beta''. When a (nuclear-encoded) sigma factor is associated with the core the holoenzyme is formed, which can initiate transcription. Zn(2+) is required as a cofactor.

Its subcellular location is the plastid. It is found in the chloroplast. The enzyme catalyses RNA(n) + a ribonucleoside 5'-triphosphate = RNA(n+1) + diphosphate. In terms of biological role, DNA-dependent RNA polymerase catalyzes the transcription of DNA into RNA using the four ribonucleoside triphosphates as substrates. In Calycanthus floridus var. glaucus (Eastern sweetshrub), this protein is DNA-directed RNA polymerase subunit beta''.